The following is a 101-amino-acid chain: MSQITEEQVKHVALLSKLEFSENEVKSFTVTFGKIIDMVEMLDEVDTDGVPFTMNVADNLNFMREDVAEKGLDREKLMAAVPEKEDGFIKVPAMLSDGGDA.

It belongs to the GatC family. In terms of assembly, heterotrimer of A, B and C subunits.

It catalyses the reaction L-glutamyl-tRNA(Gln) + L-glutamine + ATP + H2O = L-glutaminyl-tRNA(Gln) + L-glutamate + ADP + phosphate + H(+). The catalysed reaction is L-aspartyl-tRNA(Asn) + L-glutamine + ATP + H2O = L-asparaginyl-tRNA(Asn) + L-glutamate + ADP + phosphate + 2 H(+). Allows the formation of correctly charged Asn-tRNA(Asn) or Gln-tRNA(Gln) through the transamidation of misacylated Asp-tRNA(Asn) or Glu-tRNA(Gln) in organisms which lack either or both of asparaginyl-tRNA or glutaminyl-tRNA synthetases. The reaction takes place in the presence of glutamine and ATP through an activated phospho-Asp-tRNA(Asn) or phospho-Glu-tRNA(Gln). In Lactococcus lactis subsp. cremoris (strain MG1363), this protein is Aspartyl/glutamyl-tRNA(Asn/Gln) amidotransferase subunit C.